Consider the following 50-residue polypeptide: Large ribosomal subunit protein bL33 (50 aa).

It belongs to the bacterial ribosomal protein bL33 family.

The protein is Large ribosomal subunit protein bL33 of Koribacter versatilis (strain Ellin345).